A 376-amino-acid polypeptide reads, in one-letter code: Heme chaperone HemW (376 aa).

The Radical SAM core domain maps to 1–236 (MFKLPPISLY…LKQSGYKKYE (236 aa)). Y10 serves as a coordination point for S-adenosyl-L-methionine. The [4Fe-4S] cluster site is built by C16, C20, and C23. Residues G66, 67–68 (GT), E99, Q126, R138, and D162 contribute to the S-adenosyl-L-methionine site.

This sequence belongs to the anaerobic coproporphyrinogen-III oxidase family. HemW subfamily. The cofactor is [4Fe-4S] cluster.

It is found in the cytoplasm. Its function is as follows. Probably acts as a heme chaperone, transferring heme to an unknown acceptor. Binds one molecule of heme per monomer, possibly covalently. Binds 1 [4Fe-4S] cluster. The cluster is coordinated with 3 cysteines and an exchangeable S-adenosyl-L-methionine. This chain is Heme chaperone HemW, found in Buchnera aphidicola subsp. Schizaphis graminum (strain Sg).